A 307-amino-acid polypeptide reads, in one-letter code: N-acetylmuramic acid 6-phosphate etherase (307 aa).

The 164-residue stretch at isoleucine 62–lysine 225 folds into the SIS domain. The active-site Proton donor is the glutamate 90. Glutamate 121 is an active-site residue.

This sequence belongs to the GCKR-like family. MurNAc-6-P etherase subfamily. Homodimer.

It catalyses the reaction N-acetyl-D-muramate 6-phosphate + H2O = N-acetyl-D-glucosamine 6-phosphate + (R)-lactate. It functions in the pathway amino-sugar metabolism; 1,6-anhydro-N-acetylmuramate degradation. It participates in amino-sugar metabolism; N-acetylmuramate degradation. Its pathway is cell wall biogenesis; peptidoglycan recycling. Specifically catalyzes the cleavage of the D-lactyl ether substituent of MurNAc 6-phosphate, producing GlcNAc 6-phosphate and D-lactate. Together with AnmK, is also required for the utilization of anhydro-N-acetylmuramic acid (anhMurNAc) either imported from the medium or derived from its own cell wall murein, and thus plays a role in cell wall recycling. This is N-acetylmuramic acid 6-phosphate etherase from Rhizobium rhizogenes (strain K84 / ATCC BAA-868) (Agrobacterium radiobacter).